Reading from the N-terminus, the 292-residue chain is Ribosomal RNA small subunit methyltransferase A (292 aa).

Asn28, Leu30, Gly55, Glu76, Asp101, and Asn126 together coordinate S-adenosyl-L-methionine.

Belongs to the class I-like SAM-binding methyltransferase superfamily. rRNA adenine N(6)-methyltransferase family. RsmA subfamily.

Its subcellular location is the cytoplasm. The catalysed reaction is adenosine(1518)/adenosine(1519) in 16S rRNA + 4 S-adenosyl-L-methionine = N(6)-dimethyladenosine(1518)/N(6)-dimethyladenosine(1519) in 16S rRNA + 4 S-adenosyl-L-homocysteine + 4 H(+). Functionally, specifically dimethylates two adjacent adenosines (A1518 and A1519) in the loop of a conserved hairpin near the 3'-end of 16S rRNA in the 30S particle. May play a critical role in biogenesis of 30S subunits. The polypeptide is Ribosomal RNA small subunit methyltransferase A (Bacillus thuringiensis (strain Al Hakam)).